A 79-amino-acid polypeptide reads, in one-letter code: MAETKDLPFEEAMRQLEWLVEKLEEGNVPLEQAIDMFKEGMDLSQSCHEKLLKVEKQLDQIMHEDGELVEANLEEEANE.

The protein belongs to the XseB family. As to quaternary structure, heterooligomer composed of large and small subunits.

The protein localises to the cytoplasm. The catalysed reaction is Exonucleolytic cleavage in either 5'- to 3'- or 3'- to 5'-direction to yield nucleoside 5'-phosphates.. Its function is as follows. Bidirectionally degrades single-stranded DNA into large acid-insoluble oligonucleotides, which are then degraded further into small acid-soluble oligonucleotides. The polypeptide is Exodeoxyribonuclease 7 small subunit (Shouchella clausii (strain KSM-K16) (Alkalihalobacillus clausii)).